The primary structure comprises 209 residues: Uracil phosphoribosyltransferase (209 aa).

5-phospho-alpha-D-ribose 1-diphosphate is bound by residues arginine 79, arginine 104, and 131-139 (DPMLATGGS). Residues isoleucine 194 and 199–201 (GDA) each bind uracil. Aspartate 200 is a binding site for 5-phospho-alpha-D-ribose 1-diphosphate.

This sequence belongs to the UPRTase family. Requires Mg(2+) as cofactor.

The catalysed reaction is UMP + diphosphate = 5-phospho-alpha-D-ribose 1-diphosphate + uracil. The protein operates within pyrimidine metabolism; UMP biosynthesis via salvage pathway; UMP from uracil: step 1/1. Its activity is regulated as follows. Allosterically activated by GTP. Its function is as follows. Catalyzes the conversion of uracil and 5-phospho-alpha-D-ribose 1-diphosphate (PRPP) to UMP and diphosphate. The protein is Uracil phosphoribosyltransferase of Ligilactobacillus salivarius (strain UCC118) (Lactobacillus salivarius).